The primary structure comprises 441 residues: Putative T-box protein 32 (441 aa).

Residues 18–199 (NVIGSSRTSD…TGPSAKKTPE (182 aa)) constitute a DNA-binding region (T-box). The segment at 268–289 (SLSSPAALQQDSTVSSDNDFDD) is disordered. The span at 273–284 (AALQQDSTVSSD) shows a compositional bias: polar residues.

It localises to the nucleus. This Caenorhabditis elegans protein is Putative T-box protein 32 (tbx-32).